The chain runs to 296 residues: Aspartate carbamoyltransferase catalytic subunit (296 aa).

Positions 50 and 51 each coordinate carbamoyl phosphate. Residue Lys79 participates in L-aspartate binding. Arg100, His128, and Gln131 together coordinate carbamoyl phosphate. Residues Arg161 and Arg219 each contribute to the L-aspartate site. The carbamoyl phosphate site is built by Leu258 and Pro259.

The protein belongs to the aspartate/ornithine carbamoyltransferase superfamily. ATCase family. Heterooligomer of catalytic and regulatory chains.

It carries out the reaction carbamoyl phosphate + L-aspartate = N-carbamoyl-L-aspartate + phosphate + H(+). Its pathway is pyrimidine metabolism; UMP biosynthesis via de novo pathway; (S)-dihydroorotate from bicarbonate: step 2/3. In terms of biological role, catalyzes the condensation of carbamoyl phosphate and aspartate to form carbamoyl aspartate and inorganic phosphate, the committed step in the de novo pyrimidine nucleotide biosynthesis pathway. The sequence is that of Aspartate carbamoyltransferase catalytic subunit from Korarchaeum cryptofilum (strain OPF8).